The primary structure comprises 426 residues: Putative nickel insertion protein (426 aa).

It belongs to the LarC family.

The chain is Putative nickel insertion protein from Nostoc sp. (strain PCC 7120 / SAG 25.82 / UTEX 2576).